Reading from the N-terminus, the 308-residue chain is Low density lipoprotein receptor adapter protein 1 (308 aa).

An N-acetylmethionine modification is found at Met1. Ser14 bears the Phosphoserine mark. Residues 41–195 (LLEGMVFSLK…QEGGDVPGTR (155 aa)) enclose the PID domain. The disordered stretch occupies residues 179–201 (EKREKANQEGGDVPGTRRDSTPS). Phosphoserine occurs at positions 198 and 201. A Clathrin box motif is present at residues 211–215 (LLDLE). The tract at residues 248–275 (WELDDGLDEAFSRLAQSRTNPQVLDTGL) is AP-2 complex binding. The short motif at 256-265 (EAFSRLAQSR) is the [DE]-X(1,2)-F-X-X-[FL]-X-X-X-R motif element. The interval 288 to 308 (PTDWDKPDSSGIDQDDDVFTF) is disordered.

In terms of assembly, interacts (via PID domain) with LDLR (via NPXY motif). Binds to soluble clathrin trimers. Interacts with AP2B1; the interaction mediates the association with the AP-2 complex. Interacts with VLDLR. Interacts with LRP2.

Its subcellular location is the cytoplasm. Functionally, adapter protein (clathrin-associated sorting protein (CLASP)) required for efficient endocytosis of the LDL receptor (LDLR) in polarized cells such as hepatocytes and lymphocytes, but not in non-polarized cells (fibroblasts). May be required for LDL binding and internalization but not for receptor clustering in coated pits. May facilitate the endocytosis of LDLR and LDLR-LDL complexes from coated pits by stabilizing the interaction between the receptor and the structural components of the pits. May also be involved in the internalization of other LDLR family members. Binds to phosphoinositides, which regulate clathrin bud assembly at the cell surface. Required for trafficking of LRP2 to the endocytic recycling compartment which is necessary for LRP2 proteolysis, releasing a tail fragment which translocates to the nucleus and mediates transcriptional repression. The chain is Low density lipoprotein receptor adapter protein 1 from Mus musculus (Mouse).